Consider the following 276-residue polypeptide: MAD2L1-binding protein (276 aa).

Positions M1 to S10 are enriched in acidic residues. Positions M1–H30 are disordered. Positions P49 to K81 are interaction with MAD2L1.

This sequence belongs to the MAD2L1BP family. As to quaternary structure, interacts with MAD2L1.

It localises to the nucleus. The protein localises to the nucleoplasm. Its subcellular location is the cytoplasm. The protein resides in the cytoskeleton. It is found in the spindle. Functionally, may function to silence the spindle checkpoint and allow mitosis to proceed through anaphase by binding MAD2L1 after it has become dissociated from the MAD2L1-CDC20 complex. This is MAD2L1-binding protein (Mad2l1bp) from Mus musculus (Mouse).